Consider the following 662-residue polypeptide: Probable dolichyl-phosphate-mannose--protein mannosyltransferase 7 (662 aa).

Topologically, residues 1–26 (MKDLRLQGPYRKYIPYNIFQQCGIGH) are lumenal. Residues 27–47 (LKTLDYIFAFLIVITNFTLIW) form a helical membrane-spanning segment. Residues 48-159 (KSHSSSFWNR…GTIISFDSLE (112 aa)) are Cytoplasmic-facing. A helical membrane pass occupies residues 160–180 (WCLFSVVIYSFISISIAKLGT). At 181 to 195 (TNWFANVITLSISLG) the chain is on the lumenal side. A helical transmembrane segment spans residues 196–216 (LAISSKFIGIVTWAFVILSFV). The Cytoplasmic portion of the chain corresponds to 217-235 (RQFDRLISDVKVTTIQIIK). A helical transmembrane segment spans residues 236–256 (FVILCLLFVLIIPGSIFIISY). Over 257 to 482 (SNLLSNFKTD…MEYPVIPRTT (226 aa)) the chain is Lumenal. In terms of domain architecture, MIR 1 spans 289 to 344 (PSRLYYGSTITLRHLDSMVGYLASHDISYPSDVDEQLVALSFEEFAADNEWLIEHP). N-linked (GlcNAc...) asparagine glycosylation occurs at Asn347. MIR domains follow at residues 359-418 (LIPV…VLLI) and 432-488 (DKYI…IDSV). The helical transmembrane segment at 483–503 (FLIDSVQLPVDFQVPMIEYYI) threads the bilayer. Residues 504–565 (GKISSSAEFN…KWPITLDTDS (62 aa)) are Cytoplasmic-facing. The chain crosses the membrane as a helical span at residues 566–586 (PVWFNFAWYGSLLSMIIFMCV). The Lumenal portion of the chain corresponds to 587 to 617 (QCKRMISWNPWTTAEPSFSIKWEVYNEFGWE). A helical transmembrane segment spans residues 618–638 (CIVGWFLHFYIFTMSPHFNLG). Over 639–662 (KKLYFQSFFFSVLCLLESLDCLAK) the chain is Cytoplasmic.

Belongs to the glycosyltransferase 39 family.

The protein localises to the endoplasmic reticulum membrane. It catalyses the reaction a di-trans,poly-cis-dolichyl beta-D-mannosyl phosphate + L-seryl-[protein] = 3-O-(alpha-D-mannosyl)-L-seryl-[protein] + a di-trans,poly-cis-dolichyl phosphate + H(+). The catalysed reaction is a di-trans,poly-cis-dolichyl beta-D-mannosyl phosphate + L-threonyl-[protein] = 3-O-(alpha-D-mannosyl)-L-threonyl-[protein] + a di-trans,poly-cis-dolichyl phosphate + H(+). It functions in the pathway protein modification; protein glycosylation. Its function is as follows. Probable protein O-mannosyltransferase involved in O-glycosylation which is essential for cell wall rigidity. Transfers mannose from Dol-P-mannose to Ser or Thr residues on proteins. The chain is Probable dolichyl-phosphate-mannose--protein mannosyltransferase 7 from Saccharomyces cerevisiae (strain ATCC 204508 / S288c) (Baker's yeast).